The sequence spans 299 residues: RGG repeats nuclear RNA binding protein A (299 aa).

Residues arginine 1–arginine 21 show a composition bias toward gly residues. 2 disordered regions span residues arginine 1 to threonine 173 and glutamate 232 to lysine 299. Over residues arginine 45 to glycine 60 the composition is skewed to basic and acidic residues. A compositionally biased stretch (gly residues) spans glycine 61–asparagine 78. 2 stretches are compositionally biased toward basic and acidic residues: residues glutamate 86–serine 98 and aspartate 134–glycine 146. The Arginine-rich RNA-binding motif E-R-P-R-R-X-[F/Y]-[E/D]-R-R-S signature appears at glutamate 88–serine 98. Residues arginine 267–glycine 278 show a composition bias toward gly residues.

It belongs to the SERBP1-HABP4 family. As to expression, expressed in seedlings but not in roots.

It localises to the nucleus. The protein resides in the cytoplasm. It is found in the perinuclear region. Ribosome-binding protein that acts as a regulator of mRNA translation by promoting ribosome inactivation. Binds RNA. This Nicotiana tabacum (Common tobacco) protein is RGG repeats nuclear RNA binding protein A.